Consider the following 279-residue polypeptide: Large ribosomal subunit protein uL2 (279 aa).

A disordered region spans residues 223 to 279 (VVMNPVDHPHGGGEGRTSGGRHPVSPWGQPTKGYKTRRSARPSDKFIVQKRKRNRNR). The segment covering 270-279 (VQKRKRNRNR) has biased composition (basic residues).

The protein belongs to the universal ribosomal protein uL2 family. In terms of assembly, part of the 50S ribosomal subunit. Forms a bridge to the 30S subunit in the 70S ribosome.

Its function is as follows. One of the primary rRNA binding proteins. Required for association of the 30S and 50S subunits to form the 70S ribosome, for tRNA binding and peptide bond formation. It has been suggested to have peptidyltransferase activity; this is somewhat controversial. Makes several contacts with the 16S rRNA in the 70S ribosome. The chain is Large ribosomal subunit protein uL2 from Leptospira borgpetersenii serovar Hardjo-bovis (strain JB197).